Here is a 342-residue protein sequence, read N- to C-terminus: Phosphate acyltransferase (342 aa).

The protein belongs to the PlsX family. As to quaternary structure, homodimer. Probably interacts with PlsY.

Its subcellular location is the cytoplasm. It carries out the reaction a fatty acyl-[ACP] + phosphate = an acyl phosphate + holo-[ACP]. It functions in the pathway lipid metabolism; phospholipid metabolism. Catalyzes the reversible formation of acyl-phosphate (acyl-PO(4)) from acyl-[acyl-carrier-protein] (acyl-ACP). This enzyme utilizes acyl-ACP as fatty acyl donor, but not acyl-CoA. The protein is Phosphate acyltransferase of Shewanella baltica (strain OS155 / ATCC BAA-1091).